The chain runs to 364 residues: Ribosomal RNA large subunit methyltransferase M (364 aa).

Residues Ser187, 220–223, Asp239, Asp259, and Asp276 each bind S-adenosyl-L-methionine; that span reads CPGG. Lys305 functions as the Proton acceptor in the catalytic mechanism.

Belongs to the class I-like SAM-binding methyltransferase superfamily. RNA methyltransferase RlmE family. RlmM subfamily. Monomer.

The protein resides in the cytoplasm. The catalysed reaction is cytidine(2498) in 23S rRNA + S-adenosyl-L-methionine = 2'-O-methylcytidine(2498) in 23S rRNA + S-adenosyl-L-homocysteine + H(+). In terms of biological role, catalyzes the 2'-O-methylation at nucleotide C2498 in 23S rRNA. The protein is Ribosomal RNA large subunit methyltransferase M of Aeromonas hydrophila subsp. hydrophila (strain ATCC 7966 / DSM 30187 / BCRC 13018 / CCUG 14551 / JCM 1027 / KCTC 2358 / NCIMB 9240 / NCTC 8049).